The chain runs to 2167 residues: Glutamate synthase 1 [NADH], chloroplastic (2167 aa).

The disordered stretch occupies residues 1–31; the sequence is MSAAQGMAYKLRTDAAPTGAGRRARRSHSSV. The transit peptide at 1–36 directs the protein to the chloroplast; the sequence is MSAAQGMAYKLRTDAAPTGAGRRARRSHSSVAAPYR. Cys100 (nucleophile) is an active-site residue. The region spanning 100-504 is the Glutamine amidotransferase type-2 domain; it reads CGVGFVAELS…PGMMLLVDFE (405 aa). The segment at 1022–1042 is disordered; that stretch reads KSNTGEGGEQPSRMEPLANGS. Position 1192-1249 (1192-1249) interacts with FMN; the sequence is LAETHQTLVANGLRGRAILQTDGQLKTGKDVAVACLLGAEEFGFSTAPLITLGCIMMR. Positions 1245, 1251, and 1256 each coordinate [3Fe-4S] cluster. 1956–1970 serves as a coordination point for NAD(+); that stretch reads GGGDTGTDCIGTSIR.

Belongs to the glutamate synthase family. As to quaternary structure, monomer. The cofactor is [3Fe-4S] cluster. FAD is required as a cofactor. It depends on FMN as a cofactor. As to expression, highly expressed in roots.

It localises to the plastid. The protein resides in the chloroplast. It carries out the reaction 2 L-glutamate + NAD(+) = L-glutamine + 2-oxoglutarate + NADH + H(+). Its pathway is amino-acid biosynthesis; L-glutamate biosynthesis via GLT pathway; L-glutamate from 2-oxoglutarate and L-glutamine (NAD(+) route): step 1/1. It participates in energy metabolism; nitrogen metabolism. In terms of biological role, involved in glutamate biosynthesis and plays a major role in the primary ammonium ions assimilation in seedling roots. May be involved in the reutilization of glutamine in developing organs. Plays a role in the development of tillers. This Oryza sativa subsp. japonica (Rice) protein is Glutamate synthase 1 [NADH], chloroplastic.